Here is a 432-residue protein sequence, read N- to C-terminus: Glutamate-1-semialdehyde 2,1-aminomutase 1 (432 aa).

Lys268 is modified (N6-(pyridoxal phosphate)lysine).

This sequence belongs to the class-III pyridoxal-phosphate-dependent aminotransferase family. HemL subfamily. Homodimer. It depends on pyridoxal 5'-phosphate as a cofactor.

It localises to the cytoplasm. It carries out the reaction (S)-4-amino-5-oxopentanoate = 5-aminolevulinate. It functions in the pathway porphyrin-containing compound metabolism; protoporphyrin-IX biosynthesis; 5-aminolevulinate from L-glutamyl-tRNA(Glu): step 2/2. This is Glutamate-1-semialdehyde 2,1-aminomutase 1 from Bacillus cereus (strain ZK / E33L).